The primary structure comprises 107 residues: Virulence factor PGA16 (107 aa).

The signal sequence occupies residues 1 to 18 (MRVFQIVYILIISNLIYA). Residues 26–56 (SHHHKNDNNIADNTNNNNNNNNNNNNNNITN) are disordered. Low complexity predominate over residues 33–56 (NNIADNTNNNNNNNNNNNNNNITN). Asn53 and Asn56 each carry an N-linked (GlcNAc...) asparagine glycan. Gly76 carries GPI-anchor amidated glycine lipidation. Residues 77 to 107 (VAAMGGILGQNGWFYGDAGLMAAIFGAMLLL) constitute a propeptide, removed in mature form.

It localises to the cell membrane. In terms of biological role, cell surface GPI-anchored protein required for virulence. Mediates hyphal ramification which is important for the interaction with host cells. In Candida albicans (strain SC5314 / ATCC MYA-2876) (Yeast), this protein is Virulence factor PGA16 (PGA16).